A 692-amino-acid polypeptide reads, in one-letter code: Methionine--tRNA ligase (692 aa).

A 'HIGH' region motif is present at residues 26–36; the sequence is PYANGSIHLGH. C157, C160, C170, and C173 together coordinate Zn(2+). A 'KMSKS' region motif is present at residues 342 to 346; the sequence is KMSKS. K345 contacts ATP. Positions 590–692 constitute a tRNA-binding domain; that stretch reads DFAKVDLRIA…SGAQPGMRVK (103 aa).

It belongs to the class-I aminoacyl-tRNA synthetase family. MetG type 1 subfamily. As to quaternary structure, homodimer. Requires Zn(2+) as cofactor.

It is found in the cytoplasm. It carries out the reaction tRNA(Met) + L-methionine + ATP = L-methionyl-tRNA(Met) + AMP + diphosphate. In terms of biological role, is required not only for elongation of protein synthesis but also for the initiation of all mRNA translation through initiator tRNA(fMet) aminoacylation. In Methylobacillus flagellatus (strain ATCC 51484 / DSM 6875 / VKM B-1610 / KT), this protein is Methionine--tRNA ligase.